Consider the following 145-residue polypeptide: MSEQVETRLTPRERLTRGLAYSAVGPVDVTRGLLELGVGLGLQSARSTAAGLRRRYREGRLAREVAAAQETLAQELTAAQDVVANLPQALQDARTQRRSKHHLWIFAGIAAAILAGGAVAFSIVRRSSRPEPSPRPPSVEVQPRP.

A helical membrane pass occupies residues 104 to 124 (WIFAGIAAAILAGGAVAFSIV).

Belongs to the CwsA family.

It localises to the cell membrane. Required for regulated cell division, cell wall synthesis and the maintenance of cell shape. In Mycobacterium bovis (strain ATCC BAA-935 / AF2122/97), this protein is Cell wall synthesis protein CwsA.